Reading from the N-terminus, the 249-residue chain is MNKAIYESMNAAIKLLDKQAVIANNLANISTVGFKESFNLFIKDRNLQNLKKTYNQNVKEYYNFYPGTLIHTQRNLDLVIKNNGWLAIKDINGQEAYTKNGHIKINKEGKMTVQNYELIGNNGNIKIPNNVNLKISSNGIIKEIKKNKDSIIESTIGSLKLVRLQNDNLIQKENGLFYLKKDNLNKYKNILHDSSVRIQSEMLEASNVNPTKNMIDMISNARQFEMNMKIISMCDQNTEYANQLFNVNN.

Belongs to the flagella basal body rod proteins family. The basal body constitutes a major portion of the flagellar organelle and consists of five rings (E,L,P,S, and M) mounted on a central rod. The rod consists of about 26 subunits of FlgG in the distal portion, and FlgB, FlgC and FlgF are thought to build up the proximal portion of the rod with about 6 subunits each.

The protein localises to the bacterial flagellum basal body. In Buchnera aphidicola subsp. Schizaphis graminum (strain Sg), this protein is Flagellar basal-body rod protein FlgF (flgF).